The chain runs to 511 residues: GMP synthase [glutamine-hydrolyzing] (511 aa).

Positions 6-196 (LVLVLDFGSQ…VFDVCGCTGD (191 aa)) constitute a Glutamine amidotransferase type-1 domain. Cysteine 83 functions as the Nucleophile in the catalytic mechanism. Residues histidine 170 and glutamate 172 contribute to the active site. In terms of domain architecture, GMPS ATP-PPase spans 197–386 (WSIENFIDME…LGVPDRIVWR (190 aa)). 224-230 (SGGVDSS) contributes to the ATP binding site.

As to quaternary structure, homodimer.

The enzyme catalyses XMP + L-glutamine + ATP + H2O = GMP + L-glutamate + AMP + diphosphate + 2 H(+). It participates in purine metabolism; GMP biosynthesis; GMP from XMP (L-Gln route): step 1/1. Catalyzes the synthesis of GMP from XMP. The chain is GMP synthase [glutamine-hydrolyzing] from Oceanobacillus iheyensis (strain DSM 14371 / CIP 107618 / JCM 11309 / KCTC 3954 / HTE831).